A 37-amino-acid polypeptide reads, in one-letter code: Esculentin-2P (37 aa).

A disulfide bridge links Cys31 with Cys37.

Expressed by the skin glands.

It is found in the secreted. Its function is as follows. Antibacterial activity against Gram-negative bacterium E.coli. This is Esculentin-2P from Lithobates pipiens (Northern leopard frog).